Here is a 647-residue protein sequence, read N- to C-terminus: Putative lipase YDL109C (647 aa).

Ser274 serves as the catalytic Charge relay system. The tract at residues 502 to 523 (PPPSPTLYEGTAAKEGETRKTR) is disordered. A compositionally biased stretch (basic and acidic residues) spans 513 to 523 (AAKEGETRKTR).

Belongs to the putative lipase ROG1 family.

Its function is as follows. Involved in lipid metabolism. This Saccharomyces cerevisiae (strain ATCC 204508 / S288c) (Baker's yeast) protein is Putative lipase YDL109C.